The following is a 233-amino-acid chain: Glycolipid transfer protein 3 (233 aa).

A ganglioside GM3 (d18:1(4E)) contacts are provided by Asp79, Asn83, Trp126, and His165.

It belongs to the GLTP family.

May be involved in glycolipids transfer. In Arabidopsis thaliana (Mouse-ear cress), this protein is Glycolipid transfer protein 3.